The following is an 89-amino-acid chain: Large ribosomal subunit protein bL27 (89 aa).

The protein belongs to the bacterial ribosomal protein bL27 family.

The chain is Large ribosomal subunit protein bL27 from Cytophaga hutchinsonii (strain ATCC 33406 / DSM 1761 / CIP 103989 / NBRC 15051 / NCIMB 9469 / D465).